Consider the following 37-residue polypeptide: Large ribosomal subunit protein bL36 (37 aa).

Belongs to the bacterial ribosomal protein bL36 family.

This is Large ribosomal subunit protein bL36 from Aquifex aeolicus (strain VF5).